Here is a 173-residue protein sequence, read N- to C-terminus: Shikimate kinase (173 aa).

11–16 (GTGKTS) contributes to the ATP binding site. Thr15 lines the Mg(2+) pocket. Substrate-binding residues include Asp33, Arg57, and Gly79. Arg117 contacts ATP. Arg136 provides a ligand contact to substrate.

It belongs to the shikimate kinase family. Monomer. Mg(2+) serves as cofactor.

The protein resides in the cytoplasm. It catalyses the reaction shikimate + ATP = 3-phosphoshikimate + ADP + H(+). It participates in metabolic intermediate biosynthesis; chorismate biosynthesis; chorismate from D-erythrose 4-phosphate and phosphoenolpyruvate: step 5/7. Its function is as follows. Catalyzes the specific phosphorylation of the 3-hydroxyl group of shikimic acid using ATP as a cosubstrate. The chain is Shikimate kinase from Thermodesulfovibrio yellowstonii (strain ATCC 51303 / DSM 11347 / YP87).